We begin with the raw amino-acid sequence, 250 residues long: Aquaporin TIP2-1 (250 aa).

The residue at position 1 (Met1) is an N-acetylmethionine. At 1 to 20 the chain is on the cytoplasmic side; that stretch reads MAGVAFGSFDDSFSLASLRA. Ala2 bears the N-acetylalanine; in Aquaporin TIP2-1, N-terminally processed mark. A helical membrane pass occupies residues 21–41; it reads YLAEFISTLLFVFAGVGSAIA. The Vacuolar portion of the chain corresponds to 42–54; the sequence is YAKLTSDAALDTP. Residues 55-75 form a helical membrane-spanning segment; that stretch reads GLVAIAVCHGFALFVAVAIGA. Over 76-98 the chain is Cytoplasmic; it reads NISGGHVNPAVTFGLAVGGQITV. The NPA 1 motif lies at 83–85; that stretch reads NPA. A helical membrane pass occupies residues 99–119; that stretch reads ITGVFYWIAQLLGSTAACFLL. At 120–141 the chain is on the vacuolar side; sequence KYVTGGLAVPTHSVAAGLGSIE. A helical transmembrane segment spans residues 142–162; sequence GVVMEIIITFALVYTVYATAA. The Cytoplasmic segment spans residues 163–168; that stretch reads DPKKGS. The chain crosses the membrane as a helical span at residues 169–189; it reads LGTIAPLAIGLIVGANILAAG. Topologically, residues 190-215 are vacuolar; that stretch reads PFSGGSMNPARSFGPAVAAGDFSGHW. The NPA 2 signature appears at 197–199; it reads NPA. A helical membrane pass occupies residues 216–236; sequence VYWVGPLIGGGLAGLIYGNVF. Residues 237–250 are Cytoplasmic-facing; that stretch reads MGSSEHVPLASADF.

The protein belongs to the MIP/aquaporin (TC 1.A.8) family. TIP (TC 1.A.8.10) subfamily. Interacts with cucumber mosaic virus (CMV) Protein 1a. As to expression, strongly expressed in shoot, rosette, bolt and flowers. Also expressed in roots, flower buds and above ground.

The protein localises to the vacuole membrane. Functionally, aquaporin required to facilitate the transport of water from the vacuolar compartment to the cytoplasm. Does not promote glycerol permeability. Its function is impaired by Hg(2+). Transports urea in yeast cells and Xenopus laevis oocytes in a pH-independent manner. Transports methylammonium or ammonium in yeast cells and Xenopus laevis oocytes, preferentially at high medium pH. May participate in vacuolar compartmentation and detoxification of ammonium. The sequence is that of Aquaporin TIP2-1 (TIP2-1) from Arabidopsis thaliana (Mouse-ear cress).